Consider the following 1872-residue polypeptide: Plexin-A3 (1872 aa).

Residues methionine 1–glycine 19 form the signal peptide. Residues serine 20–valine 489 form the Sema domain. At serine 20–proline 1220 the chain is on the extracellular side. N-linked (GlcNAc...) asparagine glycosylation occurs at asparagine 60. Cystine bridges form between cysteine 78/cysteine 87, cysteine 113/cysteine 121, cysteine 267/cysteine 388, cysteine 283/cysteine 339, cysteine 357/cysteine 376, cysteine 492/cysteine 509, cysteine 498/cysteine 540, cysteine 501/cysteine 518, and cysteine 512/cysteine 524. N-linked (GlcNAc...) asparagine glycosylation is present at asparagine 549. Cysteine 575 and cysteine 595 are oxidised to a cystine. IPT/TIG domains are found at residues proline 841–valine 934, proline 936–threonine 1021, proline 1024–tyrosine 1123, and proline 1126–threonine 1212. Asparagine 1163 carries N-linked (GlcNAc...) asparagine glycosylation. The chain crosses the membrane as a helical span at residues alanine 1221–valine 1241. Residues leucine 1240 to glutamine 1294 adopt a coiled-coil conformation. Residues alanine 1242–serine 1872 are Cytoplasmic-facing. The residue at position 1597 (serine 1597) is a Phosphoserine.

The protein belongs to the plexin family. As to expression, detected in embryonic hindbrain, spinal cord, dorsal root ganglion, trigeminal ganglion and superior cervical ganglion. In newborns, detected throughout all layers of the hippocampus.

The protein localises to the cell membrane. Coreceptor for SEMA3A and SEMA3F. Necessary for signaling by class 3 semaphorins and subsequent remodeling of the cytoskeleton. Plays a role in axon guidance in the developing nervous system. Regulates the migration of sympathetic neurons, but not of neural crest precursors. Required for normal dendrite spine morphology in pyramidal neurons. May play a role in regulating semaphorin-mediated programmed cell death in the developing nervous system. Class 3 semaphorins bind to a complex composed of a neuropilin and a plexin. The plexin modulates the affinity of the complex for specific semaphorins, and its cytoplasmic domain is required for the activation of down-stream signaling events in the cytoplasm. The sequence is that of Plexin-A3 (Plxna3) from Mus musculus (Mouse).